The sequence spans 364 residues: Protein FAM81A (364 aa).

Positions 80–107 form a coiled coil; the sequence is IRNITAIVKQLNRDIEVLQEQIRARDNI. Basic and acidic residues predominate over residues 275-300; sequence ARLDKIEESQRRNAEGQRKPEEEKVH. Residues 275–301 are disordered; that stretch reads ARLDKIEESQRRNAEGQRKPEEEKVHG.

The protein belongs to the FAM81 family. As to quaternary structure, interacts with DLG4/PSD-95, GRIN2B/GLUN2B and SYNGAP1; the interactions facilitate condensate formation. In terms of tissue distribution, highly expressed in brain (at protein level).

It localises to the postsynaptic density. Its subcellular location is the cytoplasm. Facilitates the interaction and assembly of proteins within the postsynaptic density by promoting the condensation of postsynaptic proteins via liquid-liquid phase separation. Required for neuronal activity. Accumulation at the postsynaptic density results in enlargement of dendritic spines. The sequence is that of Protein FAM81A from Rattus norvegicus (Rat).